We begin with the raw amino-acid sequence, 189 residues long: Elongation factor P (189 aa).

N6-(3,6-diaminohexanoyl)-5-hydroxylysine is present on K34.

Belongs to the elongation factor P family. May be beta-lysylated on the epsilon-amino group of Lys-34 by the combined action of EpmA and EpmB, and then hydroxylated on the C5 position of the same residue by EpmC (if this protein is present). Lysylation is critical for the stimulatory effect of EF-P on peptide-bond formation. The lysylation moiety may extend toward the peptidyltransferase center and stabilize the terminal 3-CCA end of the tRNA. Hydroxylation of the C5 position on Lys-34 may allow additional potential stabilizing hydrogen-bond interactions with the P-tRNA.

It localises to the cytoplasm. The protein operates within protein biosynthesis; polypeptide chain elongation. Involved in peptide bond synthesis. Alleviates ribosome stalling that occurs when 3 or more consecutive Pro residues or the sequence PPG is present in a protein, possibly by augmenting the peptidyl transferase activity of the ribosome. Modification of Lys-34 is required for alleviation. This chain is Elongation factor P, found in Legionella pneumophila (strain Paris).